The following is a 338-amino-acid chain: Dehydrogenase/reductase SDR family member 7 (338 aa).

An N-terminal signal peptide occupies residues 1–28 (MSWELLLWLLALCALILPLVQLLRFLRA). The NAD(+) site is built by S60 and I62. S190 lines the substrate pocket. The NAD(+) site is built by Y203, K207, and S239. The active-site Proton acceptor is the Y203.

This sequence belongs to the short-chain dehydrogenases/reductases (SDR) family.

Its subcellular location is the endoplasmic reticulum membrane. It carries out the reaction all-trans-retinol + NADP(+) = all-trans-retinal + NADPH + H(+). It catalyses the reaction 5alpha-androstane-3alpha,17beta-diol + NADP(+) = 17beta-hydroxy-5alpha-androstan-3-one + NADPH + H(+). NADPH-dependent oxidoreductase which catalyzes the reduction of a variety of compounds bearing carbonyl groups including steroids, retinoids and xenobiotics. Catalyzes the reduction/inactivation of 5alpha-dihydrotestosterone to 3alpha-androstanediol, with a possible role in the modulation of androgen receptor function. Involved in the reduction of all-trans-retinal to all-trans-retinol. Converts cortisone to 20beta-dihydrocortisone in vitro, although the physiological relevance of this activity is questionable. Reduces exogenous compounds such as quinones (1,2-naphtoquinone, 9,10-phenantrenequinone and benzoquinone) and other xenobiotics (alpha-diketones) in vitro, suggesting a role in the biotransformation of xenobiotics with carbonyl group. A dehydrogenase activity has not been detected so far. May play a role as tumor suppressor. The protein is Dehydrogenase/reductase SDR family member 7 of Mus musculus (Mouse).